Here is a 294-residue protein sequence, read N- to C-terminus: Ribosomal protein L11 methyltransferase (294 aa).

S-adenosyl-L-methionine-binding residues include Thr145, Gly167, Asp189, and Asn230.

The protein belongs to the methyltransferase superfamily. PrmA family.

Its subcellular location is the cytoplasm. The enzyme catalyses L-lysyl-[protein] + 3 S-adenosyl-L-methionine = N(6),N(6),N(6)-trimethyl-L-lysyl-[protein] + 3 S-adenosyl-L-homocysteine + 3 H(+). Functionally, methylates ribosomal protein L11. This Alkalilimnicola ehrlichii (strain ATCC BAA-1101 / DSM 17681 / MLHE-1) protein is Ribosomal protein L11 methyltransferase.